Here is a 736-residue protein sequence, read N- to C-terminus: Phosphoribosylformylglycinamidine synthase subunit PurL (736 aa).

Residue histidine 48 is part of the active site. The ATP site is built by tyrosine 51 and lysine 90. Residue glutamate 92 coordinates Mg(2+). Substrate-binding positions include 93-96 (SHNH) and arginine 115. Histidine 94 (proton acceptor) is an active-site residue. Residue aspartate 116 participates in Mg(2+) binding. A substrate-binding site is contributed by glutamine 239. Position 267 (aspartate 267) interacts with Mg(2+). 311–313 (ESQ) contributes to the substrate binding site. ATP contacts are provided by aspartate 492 and glycine 529. Asparagine 530 contacts Mg(2+). Substrate is bound at residue serine 532.

This sequence belongs to the FGAMS family. In terms of assembly, monomer. Part of the FGAM synthase complex composed of 1 PurL, 1 PurQ and 2 PurS subunits.

It localises to the cytoplasm. The catalysed reaction is N(2)-formyl-N(1)-(5-phospho-beta-D-ribosyl)glycinamide + L-glutamine + ATP + H2O = 2-formamido-N(1)-(5-O-phospho-beta-D-ribosyl)acetamidine + L-glutamate + ADP + phosphate + H(+). It functions in the pathway purine metabolism; IMP biosynthesis via de novo pathway; 5-amino-1-(5-phospho-D-ribosyl)imidazole from N(2)-formyl-N(1)-(5-phospho-D-ribosyl)glycinamide: step 1/2. Its function is as follows. Part of the phosphoribosylformylglycinamidine synthase complex involved in the purines biosynthetic pathway. Catalyzes the ATP-dependent conversion of formylglycinamide ribonucleotide (FGAR) and glutamine to yield formylglycinamidine ribonucleotide (FGAM) and glutamate. The FGAM synthase complex is composed of three subunits. PurQ produces an ammonia molecule by converting glutamine to glutamate. PurL transfers the ammonia molecule to FGAR to form FGAM in an ATP-dependent manner. PurS interacts with PurQ and PurL and is thought to assist in the transfer of the ammonia molecule from PurQ to PurL. This is Phosphoribosylformylglycinamidine synthase subunit PurL from Bradyrhizobium diazoefficiens (strain JCM 10833 / BCRC 13528 / IAM 13628 / NBRC 14792 / USDA 110).